A 199-amino-acid polypeptide reads, in one-letter code: Outer-membrane lipoprotein LolB (199 aa).

The signal sequence occupies residues 1–28; that stretch reads MSVCPAPRSPVRWLHAFTLCLLLAVLAG. Cys-29 carries the N-palmitoyl cysteine lipid modification. Cys-29 carries S-diacylglycerol cysteine lipidation.

This sequence belongs to the LolB family. Monomer.

The protein localises to the cell outer membrane. Plays a critical role in the incorporation of lipoproteins in the outer membrane after they are released by the LolA protein. The polypeptide is Outer-membrane lipoprotein LolB (Bordetella parapertussis (strain 12822 / ATCC BAA-587 / NCTC 13253)).